Reading from the N-terminus, the 217-residue chain is Probable transaldolase (217 aa).

Lys-83 functions as the Schiff-base intermediate with substrate in the catalytic mechanism.

Belongs to the transaldolase family. Type 3B subfamily.

It localises to the cytoplasm. The catalysed reaction is D-sedoheptulose 7-phosphate + D-glyceraldehyde 3-phosphate = D-erythrose 4-phosphate + beta-D-fructose 6-phosphate. It participates in carbohydrate degradation; pentose phosphate pathway; D-glyceraldehyde 3-phosphate and beta-D-fructose 6-phosphate from D-ribose 5-phosphate and D-xylulose 5-phosphate (non-oxidative stage): step 2/3. Transaldolase is important for the balance of metabolites in the pentose-phosphate pathway. The sequence is that of Probable transaldolase from Clostridium botulinum (strain Okra / Type B1).